The primary structure comprises 704 residues: Transmembrane protein DDB_G0274347 (704 aa).

A disordered region spans residues 37–145; sequence VEQRDEVNDE…NNYNNNNTPT (109 aa). Residues 43-67 show a composition bias toward acidic residues; sequence VNDEFQEEEEELEDDDDDEDDEDEI. A compositionally biased stretch (basic and acidic residues) spans 85–99; it reads HNDKEKEKKKDKQEE. Over residues 100-113 the composition is skewed to acidic residues; it reads YIDSDDDDDDDGDE. The segment covering 114-142 has biased composition (low complexity); sequence NYYLNNNNNNNNNINNNNNYNNNNYNNNN. A glycan (N-linked (GlcNAc...) asparagine) is linked at asparagine 166. A helical membrane pass occupies residues 255–275; the sequence is ALISMALLISLVAIIFYLPLP. The N-linked (GlcNAc...) asparagine glycan is linked to asparagine 354. A run of 3 helical transmembrane segments spans residues 370–390, 414–434, and 513–533; these read LKIF…WLFA, TLLV…LYFI, and LVSF…FLIS. Residues 550 to 565 show a composition bias toward low complexity; sequence TTTTTINTTTNTTSNT. A disordered region spans residues 550 to 576; the sequence is TTTTTINTTTNTTSNTSQQSNPLSKRL. Residues asparagine 556, asparagine 560, and asparagine 564 are each glycosylated (N-linked (GlcNAc...) asparagine). Residues 566 to 576 are compositionally biased toward polar residues; that stretch reads SQQSNPLSKRL. The next 2 helical transmembrane spans lie at 609–629 and 638–658; these read FIIV…GVPP and IFFI…LIII.

It localises to the membrane. This chain is Transmembrane protein DDB_G0274347, found in Dictyostelium discoideum (Social amoeba).